The primary structure comprises 209 residues: Imidazole glycerol phosphate synthase subunit HisH (209 aa).

In terms of domain architecture, Glutamine amidotransferase type-1 spans 1-205 (MIAIIDYGMG…QGVVEAWKSS (205 aa)). The active-site Nucleophile is C79. Catalysis depends on residues H180 and E182.

In terms of assembly, heterodimer of HisH and HisF.

Its subcellular location is the cytoplasm. It carries out the reaction 5-[(5-phospho-1-deoxy-D-ribulos-1-ylimino)methylamino]-1-(5-phospho-beta-D-ribosyl)imidazole-4-carboxamide + L-glutamine = D-erythro-1-(imidazol-4-yl)glycerol 3-phosphate + 5-amino-1-(5-phospho-beta-D-ribosyl)imidazole-4-carboxamide + L-glutamate + H(+). The enzyme catalyses L-glutamine + H2O = L-glutamate + NH4(+). It participates in amino-acid biosynthesis; L-histidine biosynthesis; L-histidine from 5-phospho-alpha-D-ribose 1-diphosphate: step 5/9. Its function is as follows. IGPS catalyzes the conversion of PRFAR and glutamine to IGP, AICAR and glutamate. The HisH subunit catalyzes the hydrolysis of glutamine to glutamate and ammonia as part of the synthesis of IGP and AICAR. The resulting ammonia molecule is channeled to the active site of HisF. In Bacillus cereus (strain ATCC 14579 / DSM 31 / CCUG 7414 / JCM 2152 / NBRC 15305 / NCIMB 9373 / NCTC 2599 / NRRL B-3711), this protein is Imidazole glycerol phosphate synthase subunit HisH.